A 65-amino-acid chain; its full sequence is Small ribosomal subunit protein bS21 (65 aa).

The segment at 45 to 65 (GRLKRSRSKRRAQRANEERNS) is disordered. The span at 48–57 (KRSRSKRRAQ) shows a compositional bias: basic residues.

The protein belongs to the bacterial ribosomal protein bS21 family.

This chain is Small ribosomal subunit protein bS21, found in Chlorobium luteolum (strain DSM 273 / BCRC 81028 / 2530) (Pelodictyon luteolum).